The primary structure comprises 88 residues: Exodeoxyribonuclease 7 small subunit (88 aa).

A disordered region spans residues 69 to 88 (DPMHPDDGEPFDPSLVSTSQ).

It belongs to the XseB family. As to quaternary structure, heterooligomer composed of large and small subunits.

It is found in the cytoplasm. The enzyme catalyses Exonucleolytic cleavage in either 5'- to 3'- or 3'- to 5'-direction to yield nucleoside 5'-phosphates.. Functionally, bidirectionally degrades single-stranded DNA into large acid-insoluble oligonucleotides, which are then degraded further into small acid-soluble oligonucleotides. The sequence is that of Exodeoxyribonuclease 7 small subunit from Xylella fastidiosa (strain M23).